The following is a 247-amino-acid chain: Adenosylcobinamide-GDP ribazoletransferase (247 aa).

5 helical membrane-spanning segments follow: residues 34–54 (IITF…VFMV), 59–79 (CGVP…TGGF), 113–133 (GGLA…ELAL), 138–158 (ILAL…LLMY), and 194–214 (VLLP…AIFI).

The protein belongs to the CobS family. The cofactor is Mg(2+).

Its subcellular location is the cell inner membrane. The catalysed reaction is alpha-ribazole + adenosylcob(III)inamide-GDP = adenosylcob(III)alamin + GMP + H(+). It catalyses the reaction alpha-ribazole 5'-phosphate + adenosylcob(III)inamide-GDP = adenosylcob(III)alamin 5'-phosphate + GMP + H(+). It functions in the pathway cofactor biosynthesis; adenosylcobalamin biosynthesis; adenosylcobalamin from cob(II)yrinate a,c-diamide: step 7/7. Its function is as follows. Joins adenosylcobinamide-GDP and alpha-ribazole to generate adenosylcobalamin (Ado-cobalamin). Also synthesizes adenosylcobalamin 5'-phosphate from adenosylcobinamide-GDP and alpha-ribazole 5'-phosphate. This chain is Adenosylcobinamide-GDP ribazoletransferase, found in Shigella boydii serotype 4 (strain Sb227).